A 334-amino-acid polypeptide reads, in one-letter code: MKKKQFLKESDVTAESVFFMKRRQVLKALGISAAALSLPHAAHADLLSWFKGNDRPPAPAGKPLEFSKPAAWQNNLPLTPVDKVSGYNNFYEFGLDKADPAANAGSLKTDPWTLKISGEVAKPLTLDHDDLTRRFPLEERIYRMRCVEAWSMVVPWIGFPLHKLLALAEPTSNAKYVAFETIYAPEQMPGQQDRFIGGGLKYPYVEGLRLDEAMHPLTLMTVGVYGKALPPQNGAPVRLIVPWKYGFKGIKSIVSIKLTRERPPTTWNLAAPDEYGFYANVNPHVDHPRWSQATERFIGSGGILDVQRQPTLLFNGYADQVASLYRGLDLRENF.

Positions 1-44 (MKKKQFLKESDVTAESVFFMKRRQVLKALGISAAALSLPHAAHA) form a signal peptide, tat-type signal. Mo-molybdopterin is bound by residues asparagine 88, 91-92 (YE), cysteine 146, threonine 181, asparagine 233, arginine 238, and 249-251 (GIK).

Belongs to the MsrP family. In terms of assembly, heterodimer of a catalytic subunit (MsrP) and a heme-binding subunit (MsrQ). Mo-molybdopterin serves as cofactor. Predicted to be exported by the Tat system. The position of the signal peptide cleavage has not been experimentally proven.

The protein resides in the periplasm. The catalysed reaction is L-methionyl-[protein] + a quinone + H2O = L-methionyl-(S)-S-oxide-[protein] + a quinol. It catalyses the reaction L-methionyl-[protein] + a quinone + H2O = L-methionyl-(R)-S-oxide-[protein] + a quinol. Its function is as follows. Part of the MsrPQ system that repairs oxidized periplasmic proteins containing methionine sulfoxide residues (Met-O), using respiratory chain electrons. Thus protects these proteins from oxidative-stress damage caused by reactive species of oxygen and chlorine generated by the host defense mechanisms. MsrPQ is essential for the maintenance of envelope integrity under bleach stress, rescuing a wide series of structurally unrelated periplasmic proteins from methionine oxidation, including the primary periplasmic chaperone SurA and the lipoprotein Pal. The catalytic subunit MsrP is non-stereospecific, being able to reduce both (R-) and (S-) diastereoisomers of methionine sulfoxide. This Escherichia coli O139:H28 (strain E24377A / ETEC) protein is Protein-methionine-sulfoxide reductase catalytic subunit MsrP.